The chain runs to 606 residues: Aspartate--tRNA(Asp/Asn) ligase (606 aa).

L-aspartate is bound at residue Glu177. Residues 201–204 (QLFK) are aspartate. Position 223 (Arg223) interacts with L-aspartate. ATP is bound by residues 223–225 (RDE) and Gln232. His461 serves as a coordination point for L-aspartate. Glu499 is an ATP binding site. L-aspartate is bound at residue Arg506. 551-554 (GMDR) contributes to the ATP binding site.

This sequence belongs to the class-II aminoacyl-tRNA synthetase family. Type 1 subfamily. In terms of assembly, homodimer.

It is found in the cytoplasm. The enzyme catalyses tRNA(Asx) + L-aspartate + ATP = L-aspartyl-tRNA(Asx) + AMP + diphosphate. In terms of biological role, aspartyl-tRNA synthetase with relaxed tRNA specificity since it is able to aspartylate not only its cognate tRNA(Asp) but also tRNA(Asn). Reaction proceeds in two steps: L-aspartate is first activated by ATP to form Asp-AMP and then transferred to the acceptor end of tRNA(Asp/Asn). In Prochlorococcus marinus (strain MIT 9313), this protein is Aspartate--tRNA(Asp/Asn) ligase.